Reading from the N-terminus, the 307-residue chain is Chaperone protein DnaJ 2 (307 aa).

The region spanning 6–71 (NYYQILGVPR…TKRRELDSRL (66 aa)) is the J domain. A disordered region spans residues 69–133 (SRLFGRFRRP…TRRTKVVSPA (65 aa)). Residues 88–99 (NGGRSPNGTSVN) are compositionally biased toward polar residues. A compositionally biased stretch (low complexity) spans 100–114 (GQVRTPTGRTGTRQP).

Belongs to the DnaJ family. Homodimer. Zn(2+) serves as cofactor.

The protein localises to the cytoplasm. In terms of biological role, participates actively in the response to hyperosmotic and heat shock by preventing the aggregation of stress-denatured proteins and by disaggregating proteins, also in an autonomous, DnaK-independent fashion. Unfolded proteins bind initially to DnaJ; upon interaction with the DnaJ-bound protein, DnaK hydrolyzes its bound ATP, resulting in the formation of a stable complex. GrpE releases ADP from DnaK; ATP binding to DnaK triggers the release of the substrate protein, thus completing the reaction cycle. Several rounds of ATP-dependent interactions between DnaJ, DnaK and GrpE are required for fully efficient folding. Also involved, together with DnaK and GrpE, in the DNA replication of plasmids through activation of initiation proteins. The polypeptide is Chaperone protein DnaJ 2 (dnaJ2) (Synechocystis sp. (strain ATCC 27184 / PCC 6803 / Kazusa)).